Consider the following 314-residue polypeptide: 2,3-dihydroxyphenylpropionate/2,3-dihydroxicinnamic acid 1,2-dioxygenase (314 aa).

His-115 acts as the Proton donor in catalysis. The active-site Proton acceptor is the His-179.

This sequence belongs to the LigB/MhpB extradiol dioxygenase family. As to quaternary structure, homotetramer. It depends on Fe(2+) as a cofactor.

The enzyme catalyses 3-(2,3-dihydroxyphenyl)propanoate + O2 = (2Z,4E)-2-hydroxy-6-oxonona-2,4-dienedioate + H(+). It catalyses the reaction (2E)-3-(2,3-dihydroxyphenyl)prop-2-enoate + O2 = (2Z,4E,7E)-2-hydroxy-6-oxonona-2,4,7-trienedioate + H(+). Its pathway is aromatic compound metabolism; 3-phenylpropanoate degradation. In terms of biological role, catalyzes the non-heme iron(II)-dependent oxidative cleavage of 2,3-dihydroxyphenylpropionic acid and 2,3-dihydroxicinnamic acid into 2-hydroxy-6-ketononadienedioate and 2-hydroxy-6-ketononatrienedioate, respectively. This Klebsiella pneumoniae (strain 342) protein is 2,3-dihydroxyphenylpropionate/2,3-dihydroxicinnamic acid 1,2-dioxygenase.